The chain runs to 317 residues: Eukaryotic translation initiation factor 2 subunit 2 (317 aa).

Positions Met-1 to Gly-146 are disordered. A compositionally biased stretch (basic and acidic residues) spans Ala-79 to Asp-90. Residues Lys-109–Pro-125 are compositionally biased toward low complexity. The C4-type zinc-finger motif lies at His-222–Arg-246.

It belongs to the eIF-2-beta/eIF-5 family. In terms of assembly, eukaryotic translation initiation factor 2 eIF2 is a heterotrimeric complex composed of an alpha, a beta and a gamma subunit.

Its subcellular location is the cytoplasm. The protein localises to the cytosol. Functionally, component of the eIF2 complex that functions in the early steps of protein synthesis by forming a ternary complex with GTP and initiator tRNA. This complex binds to a 40S ribosomal subunit, followed by mRNA binding to form a 43S pre-initiation complex (43S PIC). Junction of the 60S ribosomal subunit to form the 80S initiation complex is preceded by hydrolysis of the GTP bound to eIF2 and release of an eIF2-GDP binary complex. In order for eIF2 to recycle and catalyze another round of initiation, the GDP bound to eIF2 must exchange with GTP by way of a reaction catalyzed by eIF2B. The chain is Eukaryotic translation initiation factor 2 subunit 2 (eif2s2) from Dictyostelium discoideum (Social amoeba).